The following is a 198-amino-acid chain: Carnitine operon protein CaiE (198 aa).

The tract at residues 179-198 (VEENRPRLKGTTDVKPKSAQ) is disordered. Positions 180–198 (EENRPRLKGTTDVKPKSAQ) are enriched in basic and acidic residues.

The protein belongs to the transferase hexapeptide repeat family.

The protein operates within amine and polyamine metabolism; carnitine metabolism. In terms of biological role, overproduction of CaiE stimulates the activity of CaiB and CaiD. This chain is Carnitine operon protein CaiE, found in Salmonella typhi.